A 1346-amino-acid chain; its full sequence is Cytokinesis protein sepH (1346 aa).

The interval 1-50 is disordered; sequence MVSRSNEGPEAPHPASRTPGAPAKGRLTRLGSSPSKRDDKAKDDRMGKTS. Basic and acidic residues predominate over residues 35–50; that stretch reads SKRDDKAKDDRMGKTS. A Protein kinase domain is found at 60 to 310; it reads YQLGDCLGRG…ARKLLKHPWI (251 aa). Residues 66-74 and Lys89 each bind ATP; that span reads LGRGAFGSV. Residue Asp182 is the Proton acceptor of the active site. Disordered regions lie at residues 342-380, 446-497, and 1211-1295; these read RSPE…PSPV, DESF…HMRR, and LCKL…AGAS. 2 stretches are compositionally biased toward polar residues: residues 477-489 and 1220-1249; these read QQAN…SQNG and RGST…NQSK.

Belongs to the protein kinase superfamily. Ser/Thr protein kinase family. CDC7 subfamily. The cofactor is Mg(2+).

It carries out the reaction L-seryl-[protein] + ATP = O-phospho-L-seryl-[protein] + ADP + H(+). The enzyme catalyses L-threonyl-[protein] + ATP = O-phospho-L-threonyl-[protein] + ADP + H(+). In terms of biological role, required for early events during cytokinesis including localization of cytoskeletal components to the cytokinetic ring. The protein is Cytokinesis protein sepH of Emericella nidulans (strain FGSC A4 / ATCC 38163 / CBS 112.46 / NRRL 194 / M139) (Aspergillus nidulans).